Here is a 397-residue protein sequence, read N- to C-terminus: MAKAKFERTKPHVNIGTIGHIDHGKTTLTAAITRVLHDKFPELNKASAFDQIDKAPEERQRGITISIAHVEYQTEARHYAHVDCPGHADYIKNMITGAAQMDGAILVVAATDGPMPQTKEHVILARQVGVPYIVVALNKADMVEDEELLELVEMEVRELLSSYEFPGDDVPVVRVSALKALEGDAEWGDKLMELMDAVDTAIPEPERAIDQPFLMPIEDVFTITGRGTVVTGRIERGVLNVNQEVEVVGIKPTSTKTTVTSIEMFNKMLDTGQAGDNAALLLRGLKRDDVERGQVVVKPGSITPHTEFEGQAYILSKDEGGRHTPFYNNYRPQFYFRTTDVTGVVSLPEGTEMVMPGDNTEMKVDLIQPIAMEEGLKFAIREGGRTVGAGRVVKILK.

Residues 10–206 (KPHVNIGTIG…AVDTAIPEPE (197 aa)) form the tr-type G domain. The interval 19 to 26 (GHIDHGKT) is G1. Position 19–26 (19–26 (GHIDHGKT)) interacts with GTP. Threonine 26 serves as a coordination point for Mg(2+). Residues 62-66 (GITIS) are G2. Positions 83–86 (DCPG) are G3. GTP-binding positions include 83–87 (DCPGH) and 138–141 (NKAD). A G4 region spans residues 138-141 (NKAD). The segment at 176–178 (SAL) is G5.

It belongs to the TRAFAC class translation factor GTPase superfamily. Classic translation factor GTPase family. EF-Tu/EF-1A subfamily. As to quaternary structure, monomer.

It is found in the cytoplasm. It catalyses the reaction GTP + H2O = GDP + phosphate + H(+). Functionally, GTP hydrolase that promotes the GTP-dependent binding of aminoacyl-tRNA to the A-site of ribosomes during protein biosynthesis. The protein is Elongation factor Tu of Kineococcus radiotolerans (strain ATCC BAA-149 / DSM 14245 / SRS30216).